The chain runs to 123 residues: Acidic phospholipase A2 (123 aa).

Cystine bridges form between C26/C116, C28/C44, C43/C95, C49/C123, C50/C88, C57/C81, and C75/C86. Y27, G29, and G31 together coordinate Ca(2+). The active site involves H47. Ca(2+) is bound at residue D48. D89 is an active-site residue.

Belongs to the phospholipase A2 family. Group II subfamily. D49 sub-subfamily. Homodimer. Ca(2+) serves as cofactor. In terms of tissue distribution, expressed by the venom gland.

Its subcellular location is the secreted. It catalyses the reaction a 1,2-diacyl-sn-glycero-3-phosphocholine + H2O = a 1-acyl-sn-glycero-3-phosphocholine + a fatty acid + H(+). Its function is as follows. Snake venom phospholipase A2 (PLA2) that inhibits ADP-induced platelet aggregation. PLA2 catalyzes the calcium-dependent hydrolysis of the 2-acyl groups in 3-sn-phosphoglycerides. This is Acidic phospholipase A2 from Deinagkistrodon acutus (Hundred-pace snake).